The sequence spans 538 residues: NAD(P)H-quinone oxidoreductase chain 4 (538 aa).

A run of 14 helical transmembrane segments spans residues 11–31 (FPWLSLSIFFPIVGALIVPFI), 43–63 (YALIIALITFLITVAAYFKGF), 95–115 (MPLILLTSFITSLAVLAAWPV), 119–139 (PKLFFFLILAMDGGQIAVFAV), 143–163 (LLFFLAWELELFPVYLFLAIW), 175–195 (FIIYTAGSSLFILLAGLAMGF), 217–237 (GFQLLCYSGLLIAFGVKLPIV), 251–271 (TAPVHMLLAGILLKMGGYALL), 285–305 (FAPLLIVLGVVNIIYAALTSF), 314–334 (IAYSSISHMGFVLIGIGSFSS), 340–360 (AMLQMVSHGLIGASLFFLVGA), 382–404 (IMFALWTACAFASLALPGMSGFI), 425–445 (IVVASLAAIGVILTPIYLLSM), and 472–492 (IYIIACLLVPIIGIGLYPKIM).

This sequence belongs to the complex I subunit 4 family.

The protein localises to the cellular thylakoid membrane. The catalysed reaction is a plastoquinone + NADH + (n+1) H(+)(in) = a plastoquinol + NAD(+) + n H(+)(out). The enzyme catalyses a plastoquinone + NADPH + (n+1) H(+)(in) = a plastoquinol + NADP(+) + n H(+)(out). In terms of biological role, NDH-1 shuttles electrons from NAD(P)H, via FMN and iron-sulfur (Fe-S) centers, to quinones in the respiratory chain. The immediate electron acceptor for the enzyme in this species is believed to be plastoquinone. Couples the redox reaction to proton translocation (for every two electrons transferred, four hydrogen ions are translocated across the cytoplasmic membrane), and thus conserves the redox energy in a proton gradient. This chain is NAD(P)H-quinone oxidoreductase chain 4, found in Prochlorococcus marinus (strain NATL2A).